The sequence spans 562 residues: Potassium-transporting ATPase potassium-binding subunit (562 aa).

12 consecutive transmembrane segments (helical) span residues 6–26 (FLLI…LGGF), 63–83 (ALAI…LLMA), 132–152 (GLTV…FALI), 175–195 (LYVL…QGVL), 253–273 (FVQM…FGQV), 283–303 (LIWA…YAEL), 327–347 (FGIL…CGAV), 356–376 (ALGG…FGGV), 379–399 (GLYG…LMIG), 416–436 (MTAL…ALAL), 483–503 (LLLA…VLAI), and 526–546 (LFIG…FIPA).

Belongs to the KdpA family. The system is composed of three essential subunits: KdpA, KdpB and KdpC.

It localises to the cell inner membrane. In terms of biological role, part of the high-affinity ATP-driven potassium transport (or Kdp) system, which catalyzes the hydrolysis of ATP coupled with the electrogenic transport of potassium into the cytoplasm. This subunit binds the periplasmic potassium ions and delivers the ions to the membrane domain of KdpB through an intramembrane tunnel. The sequence is that of Potassium-transporting ATPase potassium-binding subunit from Yersinia pseudotuberculosis serotype O:1b (strain IP 31758).